A 567-amino-acid polypeptide reads, in one-letter code: NAC domain-containing protein 78 (567 aa).

Positions 9-159 constitute an NAC domain; the sequence is LAPGFRFHPT…AYVLCRIFQK (151 aa). The DNA-binding element occupies 108–165; sequence VGMKKTLVYHKGRAPRGERTNWVMHEYRLSDEDLKKAGVPQEAYVLCRIFQKSGTGPK. Residues 393-436 are disordered; that stretch reads NQEALDQKPAPKELEKEVAGGKEAVEEKESGEGSSSKQDTDFKD. A compositionally biased stretch (basic and acidic residues) spans 397–423; that stretch reads LDQKPAPKELEKEVAGGKEAVEEKESG. Residues 544–564 form a helical membrane-spanning segment; it reads LVFMCLWVLLLSVSFKIVTMV.

Expressed in root meristem. Expressed in roots, rosette leaves, cauline leaves, shoot apex, stems and flowers.

It localises to the membrane. The protein localises to the nucleus. Transcriptional activator activated by proteolytic cleavage through regulated intramembrane proteolysis (RIP). Transcripition activator associated with the induction of genes related to flavonoid biosynthesis and required for the accumulation of anthocyanins in response to high light stress. Plays a role in the regulation of 20S and 26S proteasomes in response to high light stress. The protein is NAC domain-containing protein 78 (NAC078) of Arabidopsis thaliana (Mouse-ear cress).